The primary structure comprises 362 residues: Alcohol dehydrogenase 13 (362 aa).

Positions 51, 73, 104, 107, 110, 118, and 168 each coordinate Zn(2+). Histidine 73 is a binding site for substrate. Residues 193–198 (GLGGLG) and 280–282 (VGA) each bind NAD(+).

This sequence belongs to the zinc-containing alcohol dehydrogenase family. Class-III subfamily. As to quaternary structure, homodimer. The cofactor is Zn(2+).

This Catharanthus roseus (Madagascar periwinkle) protein is Alcohol dehydrogenase 13.